A 533-amino-acid chain; its full sequence is Methyl-accepting chemotaxis protein IV (533 aa).

The Cytoplasmic segment spans residues 1–6 (MFNRIR). A helical membrane pass occupies residues 7 to 33 (ISTTLFLILILCGILQIGSNGMSFWAF). At 34–188 (RDDLQRLNQV…AQSQRNYQIS (155 aa)) the chain is on the periplasmic side. Residues 189-209 (ALVFISMIIVAAIYISSALWW) traverse the membrane as a helical segment. The Cytoplasmic segment spans residues 210 to 533 (TRKMIVQPLA…VQLQIAPVVS (324 aa)). One can recognise an HAMP domain in the interval 212–264 (KMIVQPLAIIGSHFDSIAAGNLARPIAVYGRNEITAIFASLKTMQQALRGTVS). The region spanning 269–498 (GSQEMHIGIA…EAAVATEQLA (230 aa)) is the Methyl-accepting transducer domain. Gln293, Gln300, and Gln307 each carry glutamate methyl ester (Gln). Glu489 is modified (glutamate methyl ester (Glu)).

The protein belongs to the methyl-accepting chemotaxis (MCP) protein family.

It localises to the cell inner membrane. In terms of biological role, mediates taxis toward dipeptides via an interaction with the periplasmic dipeptide-binding protein. Functionally, chemotactic-signal transducers respond to changes in the concentration of attractants and repellents in the environment, transduce a signal from the outside to the inside of the cell, and facilitate sensory adaptation through the variation of the level of methylation. Attractants increase the level of methylation while repellents decrease the level of methylation, the methyl groups are added by the methyltransferase CheR and removed by the methylesterase CheB. In Escherichia coli (strain K12), this protein is Methyl-accepting chemotaxis protein IV (tap).